The sequence spans 644 residues: Translation factor guf1, mitochondrial (644 aa).

The N-terminal 31 residues, 1-31 (MTLRRFSYTFQARILRGLQARPVFVLPSRSH), are a transit peptide targeting the mitochondrion. The tr-type G domain maps to 51 to 232 (VNIRNWAIIS…AIIQRVPHPI (182 aa)). GTP-binding positions include 60 to 67 (SHIDHGKS), 125 to 129 (DTPGH), and 179 to 182 (NKID).

The protein belongs to the TRAFAC class translation factor GTPase superfamily. Classic translation factor GTPase family. LepA subfamily.

Its subcellular location is the mitochondrion inner membrane. It catalyses the reaction GTP + H2O = GDP + phosphate + H(+). Functionally, promotes mitochondrial protein synthesis. May act as a fidelity factor of the translation reaction, by catalyzing a one-codon backward translocation of tRNAs on improperly translocated ribosomes. Binds to mitochondrial ribosomes in a GTP-dependent manner. This is Translation factor guf1, mitochondrial (guf1) from Schizosaccharomyces japonicus (strain yFS275 / FY16936) (Fission yeast).